Here is a 324-residue protein sequence, read N- to C-terminus: uncharacterized protein (324 aa).

One can recognise an HTH lysR-type domain in the interval 6–63; that stretch reads LKYRELKIISVIAASENISHAATVLGIAQANVSKYLADFESKVGLKVFDRTTRQLMLT. Residues 23-42 constitute a DNA-binding region (H-T-H motif); sequence ISHAATVLGIAQANVSKYLA.

This sequence belongs to the LysR transcriptional regulatory family.

This is an uncharacterized protein from Escherichia coli (strain K12).